A 248-amino-acid chain; its full sequence is Functional amyloid sbunit FapE (248 aa).

The N-terminal stretch at 1 to 20 (MNTSRWLTALCLAASMPAYA) is a signal peptide.

Belongs to the FapE family. As to quaternary structure, a minor component of purified amyloid fibrils. Fibrils are resistant to boiling in 2% (weight/vol) SDS and require &gt;90% (vol/vol) formic acid to dissolve.

Its subcellular location is the fimbrium. The protein localises to the secreted. Functionally, a minor component of the functional amyloid in this bacterium. Upon overexpression of the endogenous six-gene locus (fapA-fapF) in situ, cells form large clumps during liquid growth, make large amounts of biofilm and produce amyloid fibrils. Expression of the 6 gene operon in E.coli strain BL21(DE3) induces flocculation and biofilm formation with copious extracellular fibrils. The sequence is that of Functional amyloid sbunit FapE from Pseudomonas fluorescens.